The following is a 382-amino-acid chain: Flap endonuclease 1 (382 aa).

Residues 1 to 105 form an N-domain region; the sequence is MGIKGLNAII…HELTKRSSRR (105 aa). A Mg(2+)-binding site is contributed by Asp-34. 2 residues coordinate DNA: Arg-47 and Arg-71. Positions 87, 156, 158, 177, and 179 each coordinate Mg(2+). The tract at residues 120–251 is I-domain; that stretch reads EKMKQERRLV…VTALKLIKTH (132 aa). Glu-156 is a DNA binding site. The DNA site is built by Gly-229 and Asp-231. Residue Asp-231 coordinates Mg(2+). The interaction with PCNA stretch occupies residues 339-347; the sequence is IQGRLDGFF. A disordered region spans residues 358–382; sequence AAAAKRAQENKKLNKNKNKVTKGRR. Residues 370-382 show a composition bias toward basic residues; that stretch reads LNKNKNKVTKGRR.

The protein belongs to the XPG/RAD2 endonuclease family. FEN1 subfamily. Interacts with PCNA. Three molecules of RAD27 bind to one PCNA trimer with each molecule binding to one PCNA monomer. PCNA stimulates the nuclease activity without altering cleavage specificity. The cofactor is Mg(2+). Post-translationally, phosphorylated. Phosphorylation upon DNA damage induces relocalization to the nuclear plasma.

Its subcellular location is the nucleus. It localises to the nucleolus. It is found in the nucleoplasm. The protein localises to the mitochondrion. In terms of biological role, structure-specific nuclease with 5'-flap endonuclease and 5'-3' exonuclease activities involved in DNA replication and repair. During DNA replication, cleaves the 5'-overhanging flap structure that is generated by displacement synthesis when DNA polymerase encounters the 5'-end of a downstream Okazaki fragment. It enters the flap from the 5'-end and then tracks to cleave the flap base, leaving a nick for ligation. Also involved in the long patch base excision repair (LP-BER) pathway, by cleaving within the apurinic/apyrimidinic (AP) site-terminated flap. Acts as a genome stabilization factor that prevents flaps from equilibrating into structures that lead to duplications and deletions. Also possesses 5'-3' exonuclease activity on nicked or gapped double-stranded DNA, and exhibits RNase H activity. Also involved in replication and repair of rDNA and in repairing mitochondrial DNA. The protein is Flap endonuclease 1 of Saccharomyces cerevisiae (strain RM11-1a) (Baker's yeast).